A 482-amino-acid polypeptide reads, in one-letter code: UDP-N-acetylmuramate--L-alanine ligase (482 aa).

Positions 1–26 are disordered; it reads MPQLPMTDSAPLPTPAPSSPAQPSAQ. Residue 140-146 coordinates ATP; sequence GTHGKTT.

This sequence belongs to the MurCDEF family.

It is found in the cytoplasm. It carries out the reaction UDP-N-acetyl-alpha-D-muramate + L-alanine + ATP = UDP-N-acetyl-alpha-D-muramoyl-L-alanine + ADP + phosphate + H(+). It functions in the pathway cell wall biogenesis; peptidoglycan biosynthesis. Cell wall formation. This is UDP-N-acetylmuramate--L-alanine ligase from Deinococcus radiodurans (strain ATCC 13939 / DSM 20539 / JCM 16871 / CCUG 27074 / LMG 4051 / NBRC 15346 / NCIMB 9279 / VKM B-1422 / R1).